Reading from the N-terminus, the 187-residue chain is GTP cyclohydrolase 1 (187 aa).

Positions 79, 82, and 150 each coordinate Zn(2+).

Belongs to the GTP cyclohydrolase I family. In terms of assembly, toroid-shaped homodecamer, composed of two pentamers of five dimers.

It catalyses the reaction GTP + H2O = 7,8-dihydroneopterin 3'-triphosphate + formate + H(+). It participates in cofactor biosynthesis; 7,8-dihydroneopterin triphosphate biosynthesis; 7,8-dihydroneopterin triphosphate from GTP: step 1/1. The sequence is that of GTP cyclohydrolase 1 from Fusobacterium nucleatum subsp. nucleatum (strain ATCC 25586 / DSM 15643 / BCRC 10681 / CIP 101130 / JCM 8532 / KCTC 2640 / LMG 13131 / VPI 4355).